The following is a 337-amino-acid chain: Meiotic driver wtf4 (337 aa).

Positions Met1–Pro29 are enriched in basic and acidic residues. The segment at Met1–Thr40 is disordered. Helical transmembrane passes span Leu89–Pro109, Ala119–Phe139, Cys149–Tyr169, Val176–Phe196, Cys210–Leu230, and Phe234–Leu254.

It belongs to the WTF family. In terms of assembly, homomer. Forms protein aggregates. The two isoforms can interact with each other and with themselves. High sequence similarity is required for their interaction.

The protein localises to the spore membrane. It localises to the vacuole membrane. Its subcellular location is the ascus epiplasm. It is found in the cytoplasm. The protein resides in the endoplasmic reticulum membrane. Promotes unequal transmission of alleles from the parental zygote to progeny spores by acting as poison/antidote system where the poison and antidote proteins are produced from the same locus; the poison component is trans-acting and targets all spores within an ascus whereas the antidote component is spore-specific, leading to poisoning of all progeny that do not inherit the allele. Functionally, localizes isoform 2 to the vacuole thereby facilitating its degradation. Its function is as follows. Forms toxic aggregates that disrupt spore maturation. The protein is Meiotic driver wtf4 of Schizosaccharomyces kambucha (Fission yeast).